A 729-amino-acid chain; its full sequence is Fatty acid oxidation complex subunit alpha (729 aa).

The tract at residues 1–189 (MLYKGDTLYL…KIGLVDGVVK (189 aa)) is enoyl-CoA hydratase/isomerase. Aspartate 296 provides a ligand contact to substrate. The interval 311–729 (ETPKQAAVLG…ARPVGDLKTA (419 aa)) is 3-hydroxyacyl-CoA dehydrogenase. Residues methionine 324, aspartate 343, 400-402 (VVE), lysine 407, and serine 429 each bind NAD(+). Catalysis depends on histidine 450, which acts as the For 3-hydroxyacyl-CoA dehydrogenase activity. An NAD(+)-binding site is contributed by asparagine 453. Positions 500 and 660 each coordinate substrate. The tract at residues 708–729 (RHNEPYYPPVEPARPVGDLKTA) is disordered.

The protein in the N-terminal section; belongs to the enoyl-CoA hydratase/isomerase family. This sequence in the C-terminal section; belongs to the 3-hydroxyacyl-CoA dehydrogenase family. In terms of assembly, heterotetramer of two alpha chains (FadB) and two beta chains (FadA).

It carries out the reaction a (3S)-3-hydroxyacyl-CoA + NAD(+) = a 3-oxoacyl-CoA + NADH + H(+). The enzyme catalyses a (3S)-3-hydroxyacyl-CoA = a (2E)-enoyl-CoA + H2O. The catalysed reaction is a 4-saturated-(3S)-3-hydroxyacyl-CoA = a (3E)-enoyl-CoA + H2O. It catalyses the reaction (3S)-3-hydroxybutanoyl-CoA = (3R)-3-hydroxybutanoyl-CoA. It carries out the reaction a (3Z)-enoyl-CoA = a 4-saturated (2E)-enoyl-CoA. The enzyme catalyses a (3E)-enoyl-CoA = a 4-saturated (2E)-enoyl-CoA. The protein operates within lipid metabolism; fatty acid beta-oxidation. Its function is as follows. Involved in the aerobic and anaerobic degradation of long-chain fatty acids via beta-oxidation cycle. Catalyzes the formation of 3-oxoacyl-CoA from enoyl-CoA via L-3-hydroxyacyl-CoA. It can also use D-3-hydroxyacyl-CoA and cis-3-enoyl-CoA as substrate. In Escherichia coli O81 (strain ED1a), this protein is Fatty acid oxidation complex subunit alpha.